The chain runs to 1671 residues: Hybrid signal transduction protein dokA (1671 aa).

Basic and acidic residues predominate over residues 1–10 (MSSPHIELHS). Disordered regions lie at residues 1–27 (MSSP…ELTG), 42–89 (DDLN…DKND), 126–241 (QQQQ…RRSS), 365–451 (YSNN…NNEE), 579–603 (HNHN…SPFI), and 629–651 (SNSS…SSNA). A compositionally biased stretch (polar residues) spans 11–27 (QRTLSPQPSSNNFELTG). Low complexity-rich tracts occupy residues 45-83 (NNNN…NNNN) and 126-167 (QQQQ…QQQE). The segment covering 168-179 (QEQEQEQEQEQE) has biased composition (acidic residues). Residues 367 to 449 (NNNNNTNTNN…NNNNNNNNNN (83 aa)) are compositionally biased toward low complexity. The segment covering 591–600 (TTQRASSTDS) has biased composition (polar residues). In terms of domain architecture, Histidine kinase spans 1050–1276 (NISHELRTPC…TFWFAIKVSI (227 aa)). The Response regulatory domain maps to 1519–1633 (YILVAEDNDI…RLQKTLSDWI (115 aa)).

Under osmotic stress conditions, this protein undergoes phosphorylation at a serine residue in the kinase core, which is not due to an autophosphorylation of dokA. This is in contrast to the classic two-component paradigm, which predicts only histidine and aspartate phosphorylation.

Part of the osmoregulatory pathway which leads to the increase of intracellular cAMP concentration in response to hyperosmotic stress. Thought to negatively regulate the rdeA-regA pathway by acting as a phosphatase towards the HPt protein rdeA. Has probably no histidine kinase activity. This chain is Hybrid signal transduction protein dokA (dokA), found in Dictyostelium discoideum (Social amoeba).